Reading from the N-terminus, the 764-residue chain is Complement factor B (764 aa).

Residues 1–25 form the signal peptide; sequence MGSNLSPQLCLMPFILGLLSGGVTT. 3 consecutive Sushi domains span residues 35-100, 101-160, and 163-220; these read GSCS…ECRA, IHCP…ICDN, and GYCS…SCQD. Cystine bridges form between C37-C76, C62-C98, C103-C145, C131-C158, C165-C205, and C191-C218. N-linked (GlcNAc...) asparagine glycosylation is found at N122 and N142. Residues 270 to 469 form the VWFA domain; sequence NIYLVLDGSD…NLEDVFYQMI (200 aa). 2 residues coordinate Mg(2+): S278 and S280. Mn(2+)-binding residues include S278 and S280. N285 carries an N-linked (GlcNAc...) asparagine glycan. K291 is a glycosylation site (N-linked (Glc) (glycation) lysine). T353 contributes to the Mg(2+) binding site. Residue T353 participates in Mn(2+) binding. N378 carries N-linked (GlcNAc...) asparagine glycosylation. Residues 477–757 form the Peptidase S1 domain; the sequence is LCGMVWEHRK…VLPWLKEKLQ (281 aa). Intrachain disulfides connect C478–C596, C511–C527, C599–C615, C656–C682, and C695–C725. Residues H526 and D576 each act as charge relay system in the active site. S699 (charge relay system) is an active-site residue.

The protein belongs to the peptidase S1 family. In terms of assembly, monomer. Interacts with complement C3b; this interaction is dependent on the presence of Mg(2+). As to quaternary structure, catalytic component of the C3 convertase of the alternative complement pathway, also named C3bBb, composed of complement factor B Bb and complement C3b. Catalytic component of the C5 convertase of the alternative complement pathway, also named C3bBb3b, composed of complement factor B Bb and additional molecules of complement C3b. Interacts to CFP; this interaction contributes to the stabilization of the active C3-convertase enzyme complex. Mg(2+) serves as cofactor. It depends on Mn(2+) as a cofactor. In terms of processing, cleaved by CFD following activation of the alternative complement system, generating Ba and Bb chains. Cleavage and activation takes place when CFB is already associated with complement C3b.

It is found in the secreted. The protein resides in the cell surface. The catalysed reaction is Cleavage of Arg-|-Ser bond in complement component C3 alpha-chain to yield C3a and C3b, and Arg-|-Xaa bond in complement component C5 alpha-chain to yield C5a and C5b.. Functionally, precursor of the catalytic component of the C3 and C5 convertase complexes of the alternative pathway of the complement system, a cascade of proteins that leads to phagocytosis and breakdown of pathogens and signaling that strengthens the adaptive immune system. The alternative complement pathway acts as an amplification loop that enhances other complement pathways (classical, lectin and GZMK) by promoting formation of additional C3 and C5 convertases. CFB is cleaved and activated by CFD to generate Ba and Bb chains; Bb chain constituting the catalytic component of the C3 and C5 convertases. In terms of biological role, serine protease component of the complement C3 and C5 convertase complexes of the alternative complement pathway. Following cleavage and activation by factor D (CFD), forms the C3 convertase together with complement C3b. As part of the C3 convertase, cleaves and activates C3 into C3a anaphylatoxin and C3b opsonin, the next components of the complement pathways. When an additional complement C3b molecule binds to the C3 convertase, forms the C5 convertase, which cleaves and activates C5 into C5a anaphylatoxin and C5b component of the membrane attack complex. Involved in proliferation and differentiation of preactivated B-lymphocytes, rapid spreading of peripheral blood monocytes, stimulation of lymphocyte blastogenesis and lysis of erythrocytes. This is Complement factor B from Homo sapiens (Human).